The primary structure comprises 67 residues: Large ribosomal subunit protein uL30 (67 aa).

It belongs to the universal ribosomal protein uL30 family. Part of the 50S ribosomal subunit.

The polypeptide is Large ribosomal subunit protein uL30 (Sorangium cellulosum (strain So ce56) (Polyangium cellulosum (strain So ce56))).